The sequence spans 161 residues: RNA pyrophosphohydrolase (161 aa).

One can recognise a Nudix hydrolase domain in the interval 12 to 154; the sequence is PYRIGVGMVI…KRKLYKAVIN (143 aa). A Nudix box motif is present at residues 46–67; the sequence is GGIILGETYSKAVLREMKEEIG.

This sequence belongs to the Nudix hydrolase family. RppH subfamily. The cofactor is a divalent metal cation.

Functionally, accelerates the degradation of transcripts by removing pyrophosphate from the 5'-end of triphosphorylated RNA, leading to a more labile monophosphorylated state that can stimulate subsequent ribonuclease cleavage. This is RNA pyrophosphohydrolase from Orientia tsutsugamushi (strain Boryong) (Rickettsia tsutsugamushi).